We begin with the raw amino-acid sequence, 156 residues long: Biotin carboxyl carrier protein of acetyl-CoA carboxylase (156 aa).

A Biotinyl-binding domain is found at 80 to 156; sequence GNVVRSPMVG…EFDQPLFTIV (77 aa). K122 carries the N6-biotinyllysine modification.

As to quaternary structure, homodimer.

The protein operates within lipid metabolism; fatty acid biosynthesis. In terms of biological role, this protein is a component of the acetyl coenzyme A carboxylase complex; first, biotin carboxylase catalyzes the carboxylation of the carrier protein and then the transcarboxylase transfers the carboxyl group to form malonyl-CoA. The chain is Biotin carboxyl carrier protein of acetyl-CoA carboxylase (accB) from Pseudomonas aeruginosa (strain ATCC 15692 / DSM 22644 / CIP 104116 / JCM 14847 / LMG 12228 / 1C / PRS 101 / PAO1).